We begin with the raw amino-acid sequence, 915 residues long: Protein translocase subunit SecA (915 aa).

Residues Gln87, 105–109 (GEGKT), and Asp512 contribute to the ATP site. Residues 881–915 (LPGTAPVRPEPKIGRNEPCPCGSGKKYKHCHGQLN) form a disordered region. Residues Cys899, Cys901, Cys910, and His911 each contribute to the Zn(2+) site. Basic residues predominate over residues 905 to 915 (KKYKHCHGQLN).

It belongs to the SecA family. Monomer and homodimer. Part of the essential Sec protein translocation apparatus which comprises SecA, SecYEG and auxiliary proteins SecDF-YajC and YidC. Zn(2+) serves as cofactor.

The protein localises to the cell inner membrane. Its subcellular location is the cytoplasm. The catalysed reaction is ATP + H2O + cellular proteinSide 1 = ADP + phosphate + cellular proteinSide 2.. In terms of biological role, part of the Sec protein translocase complex. Interacts with the SecYEG preprotein conducting channel. Has a central role in coupling the hydrolysis of ATP to the transfer of proteins into and across the cell membrane, serving both as a receptor for the preprotein-SecB complex and as an ATP-driven molecular motor driving the stepwise translocation of polypeptide chains across the membrane. The sequence is that of Protein translocase subunit SecA from Azotobacter vinelandii (strain DJ / ATCC BAA-1303).